Consider the following 286-residue polypeptide: Cytochrome c oxidase subunit 3 (286 aa).

Transmembrane regions (helical) follow at residues 13-33 (GVFL…GVVI), 40-60 (VGTF…CFLI), 85-105 (IIQY…VVFF), 133-153 (IILD…NIIL), 173-195 (LCRE…LLFI), 199-221 (VWEF…LFSI), 223-243 (TLHF…IFNI), and 253-273 (IVLI…WFFL).

This sequence belongs to the cytochrome c oxidase subunit 3 family. Component of the cytochrome c oxidase (complex IV, CIV), a multisubunit enzyme composed of a catalytic core of 3 subunits and several supernumerary subunits. The complex exists as a monomer or a dimer and forms supercomplexes (SCs) in the inner mitochondrial membrane with ubiquinol-cytochrome c oxidoreductase (cytochrome b-c1 complex, complex III, CIII).

The protein localises to the mitochondrion inner membrane. The enzyme catalyses 4 Fe(II)-[cytochrome c] + O2 + 8 H(+)(in) = 4 Fe(III)-[cytochrome c] + 2 H2O + 4 H(+)(out). Functionally, component of the cytochrome c oxidase, the last enzyme in the mitochondrial electron transport chain which drives oxidative phosphorylation. The respiratory chain contains 3 multisubunit complexes succinate dehydrogenase (complex II, CII), ubiquinol-cytochrome c oxidoreductase (cytochrome b-c1 complex, complex III, CIII) and cytochrome c oxidase (complex IV, CIV), that cooperate to transfer electrons derived from NADH and succinate to molecular oxygen, creating an electrochemical gradient over the inner membrane that drives transmembrane transport and the ATP synthase. Cytochrome c oxidase is the component of the respiratory chain that catalyzes the reduction of oxygen to water. Electrons originating from reduced cytochrome c in the intermembrane space (IMS) are transferred via the dinuclear copper A center (CU(A)) of subunit 2 and heme A of subunit 1 to the active site in subunit 1, a binuclear center (BNC) formed by heme A3 and copper B (CU(B)). The BNC reduces molecular oxygen to 2 water molecules using 4 electrons from cytochrome c in the IMS and 4 protons from the mitochondrial matrix. The chain is Cytochrome c oxidase subunit 3 (COIII) from Trypanoplasma borreli.